The primary structure comprises 365 residues: Alanine racemase (365 aa).

The Proton acceptor; specific for D-alanine role is filled by Lys35. Position 35 is an N6-(pyridoxal phosphate)lysine (Lys35). A substrate-binding site is contributed by Arg130. Tyr256 (proton acceptor; specific for L-alanine) is an active-site residue. Met304 lines the substrate pocket.

This sequence belongs to the alanine racemase family. Pyridoxal 5'-phosphate serves as cofactor.

It catalyses the reaction L-alanine = D-alanine. The protein operates within amino-acid biosynthesis; D-alanine biosynthesis; D-alanine from L-alanine: step 1/1. In terms of biological role, catalyzes the interconversion of L-alanine and D-alanine. May also act on other amino acids. In Acidovorax ebreus (strain TPSY) (Diaphorobacter sp. (strain TPSY)), this protein is Alanine racemase (alr).